A 274-amino-acid chain; its full sequence is Proteasome subunit beta (274 aa).

Positions 1 to 52 are cleaved as a propeptide — removed in mature form; by autocatalysis; it reads MADPMGGAGRLPAVFMTPGTSSFTDFLSQSAPHLLPGARGGLPGPVTEVAHG. The active-site Nucleophile is the Thr-53.

It belongs to the peptidase T1B family. As to quaternary structure, the 20S proteasome core is composed of 14 alpha and 14 beta subunits that assemble into four stacked heptameric rings, resulting in a barrel-shaped structure. The two inner rings, each composed of seven catalytic beta subunits, are sandwiched by two outer rings, each composed of seven alpha subunits. The catalytic chamber with the active sites is on the inside of the barrel. Has a gated structure, the ends of the cylinder being occluded by the N-termini of the alpha-subunits. Is capped by the proteasome-associated ATPase, ARC.

The protein localises to the cytoplasm. The enzyme catalyses Cleavage of peptide bonds with very broad specificity.. The protein operates within protein degradation; proteasomal Pup-dependent pathway. The formation of the proteasomal ATPase ARC-20S proteasome complex, likely via the docking of the C-termini of ARC into the intersubunit pockets in the alpha-rings, may trigger opening of the gate for substrate entry. Interconversion between the open-gate and close-gate conformations leads to a dynamic regulation of the 20S proteasome proteolysis activity. In terms of biological role, component of the proteasome core, a large protease complex with broad specificity involved in protein degradation. The sequence is that of Proteasome subunit beta from Frankia alni (strain DSM 45986 / CECT 9034 / ACN14a).